The following is a 393-amino-acid chain: Small ribosomal subunit protein bS1 (393 aa).

S1 motif domains are found at residues 16–90, 108–173, 194–262, and 279–348; these read GDKV…LSKR, NQTI…LSRK, and GDVI…LSIK. Residues 356-369 show a composition bias toward polar residues; it reads VIESDSETTQSYLD. A disordered region spans residues 356 to 381; it reads VIESDSETTQSYLDNGSDDEDNPTLG.

This sequence belongs to the bacterial ribosomal protein bS1 family.

Binds mRNA; thus facilitating recognition of the initiation point. It is needed to translate mRNA with a short Shine-Dalgarno (SD) purine-rich sequence. In Staphylococcus saprophyticus subsp. saprophyticus (strain ATCC 15305 / DSM 20229 / NCIMB 8711 / NCTC 7292 / S-41), this protein is Small ribosomal subunit protein bS1 (rpsA).